We begin with the raw amino-acid sequence, 162 residues long: Sec-independent protein translocase protein TatB (162 aa).

Residues 1 to 21 traverse the membrane as a helical segment; the sequence is MFDIGFSELILIFVVGLVVLG. The interval 136–162 is disordered; sequence LTAYYPPDDDLVSPSTTKLEQDKQNVN.

Belongs to the TatB family. The Tat system comprises two distinct complexes: a TatABC complex, containing multiple copies of TatA, TatB and TatC subunits, and a separate TatA complex, containing only TatA subunits. Substrates initially bind to the TatABC complex, which probably triggers association of the separate TatA complex to form the active translocon.

It is found in the cell inner membrane. Part of the twin-arginine translocation (Tat) system that transports large folded proteins containing a characteristic twin-arginine motif in their signal peptide across membranes. Together with TatC, TatB is part of a receptor directly interacting with Tat signal peptides. TatB may form an oligomeric binding site that transiently accommodates folded Tat precursor proteins before their translocation. The chain is Sec-independent protein translocase protein TatB from Haemophilus ducreyi (strain 35000HP / ATCC 700724).